The chain runs to 179 residues: MIP18 family protein C144.16 (179 aa).

Positions 1–26 (MSANLQNENPEVKELNQLPSRVEEEE) are disordered.

This sequence belongs to the MIP18 family.

May play a role in chromosome segregation through establishment of sister chromatid cohesion. The chain is MIP18 family protein C144.16 from Schizosaccharomyces pombe (strain 972 / ATCC 24843) (Fission yeast).